Here is a 420-residue protein sequence, read N- to C-terminus: Argininosuccinate synthase (420 aa).

ATP is bound by residues 9 to 17 (AYSGGLDTS) and A35. Y86 and S91 together coordinate L-citrulline. 114–122 (SHGCTGKGN) lines the ATP pocket. L-aspartate contacts are provided by T118, N122, and D123. N122 is a binding site for L-citrulline. R126, S179, S188, E273, and Y285 together coordinate L-citrulline.

It belongs to the argininosuccinate synthase family. Type 1 subfamily. As to quaternary structure, homotetramer.

The protein localises to the cytoplasm. It catalyses the reaction L-citrulline + L-aspartate + ATP = 2-(N(omega)-L-arginino)succinate + AMP + diphosphate + H(+). The protein operates within amino-acid biosynthesis; L-arginine biosynthesis; L-arginine from L-ornithine and carbamoyl phosphate: step 2/3. Functionally, catalyzes the eighth step in arginine biosynthesis. Also has a catabolic function as the first enzyme of citrulline utilization as nitrogen source via arginine and the reactions involved in the arginase pathway. The sequence is that of Argininosuccinate synthase (ARG1) from Saccharomyces cerevisiae (strain ATCC 204508 / S288c) (Baker's yeast).